The chain runs to 179 residues: O-acetyl-ADP-ribose deacetylase (179 aa).

The region spanning 1–175 (MTSRLQVIQG…LYARLLTQQG (175 aa)) is the Macro domain. Residues 11-12 (DI), asparagine 25, 33-35 (GVD), and 122-126 (STGVY) contribute to the substrate site. Residue aspartate 35 is the Proton acceptor of the active site.

Belongs to the MacroD-type family. YmdB subfamily. As to quaternary structure, homodimer. Interacts with RNase III.

It catalyses the reaction 3''-O-acetyl-ADP-D-ribose + H2O = ADP-D-ribose + acetate + H(+). The catalysed reaction is 2''-O-acetyl-ADP-D-ribose + H2O = ADP-D-ribose + acetate + H(+). Functionally, deacetylates O-acetyl-ADP ribose to yield ADP-ribose and free acetate. Down-regulates ribonuclease 3 (RNase III) activity. Acts by interacting directly with the region of the ribonuclease that is required for dimerization/activation. This is O-acetyl-ADP-ribose deacetylase from Salmonella newport (strain SL254).